Here is a 164-residue protein sequence, read N- to C-terminus: MD-2-related lipid-recognition protein 3 (164 aa).

Residues 1 to 24 (MAMSHVQPMLLLLVSLFFLPALRG) form the signal peptide.

In terms of assembly, interacts with RUB1/NEDD8. Neddylated. In terms of processing, ubiquitinated.

Its subcellular location is the vacuole. It is found in the endoplasmic reticulum. Its function is as follows. May be involved in herbivory-mediated responses. May play a role in herbivory-associated molecular pattern (HAMP) recognition. May function is jasmonate (JA) signaling in response to HAMP. May play a role in defense response against the pathogens Altenaria brassicicola and Pseudomonas syringae. This is MD-2-related lipid-recognition protein 3 from Arabidopsis thaliana (Mouse-ear cress).